Consider the following 276-residue polypeptide: SF-assemblin (276 aa).

The tract at residues 1 to 31 is nonhelical region; it reads MSLRPFETPGGLSSLSPRRRDFSPTRPGTNG. The disordered stretch occupies residues 1-37; the sequence is MSLRPFETPGGLSSLSPRRRDFSPTRPGTNGPSAKLE. The interval 32–276 is rod; sequence PSAKLEHVTE…LQEGLKLVSA (245 aa). Residues 67-145 adopt a coiled-coil conformation; it reads LLQESLQRIE…LVRDERESRR (79 aa).

It belongs to the SF-assemblin family.

The protein localises to the cytoplasm. Its subcellular location is the cytoskeleton. Functionally, major component of the striated microtubule-associated fibers (SMAFs; system-I-fibers). This chain is SF-assemblin, found in Chlamydomonas reinhardtii (Chlamydomonas smithii).